Reading from the N-terminus, the 218-residue chain is Cytidylate kinase (218 aa).

Residue 7-15 (GPSASGKSS) participates in ATP binding.

Belongs to the cytidylate kinase family. Type 1 subfamily.

The protein localises to the cytoplasm. The enzyme catalyses CMP + ATP = CDP + ADP. It catalyses the reaction dCMP + ATP = dCDP + ADP. The polypeptide is Cytidylate kinase (Borrelia hermsii (strain HS1 / DAH)).